The chain runs to 137 residues: Large ribosomal subunit protein uL16c (137 aa).

Residues 1–21 (MLSPKKTKYRKQHRGRMKGKA) form a disordered region.

The protein belongs to the universal ribosomal protein uL16 family. Part of the 50S ribosomal subunit.

The protein resides in the plastid. It is found in the chloroplast. This is Large ribosomal subunit protein uL16c from Oedogonium cardiacum (Filamentous green alga).